We begin with the raw amino-acid sequence, 144 residues long: Necrosis-inducing secreted protein 1 (144 aa).

The signal sequence occupies residues 1–19 (MQFRASIAAAAGLFALANA). N-linked (GlcNAc...) asparagine glycosylation is found at Asn-88, Asn-126, and Asn-133. Positions 103 to 132 (QYVVAAGLYSLYGASSSPTLSHYNVTVTVG) are BAK1/SERK3-binding.

The protein belongs to the NIS1 effector family.

The protein localises to the secreted. It localises to the host cytoplasm. In terms of biological role, secreted effector that induces necrotic lesions in Nicotiana benthamiana. Interacts with the host receptor-like kinases (RLKs) BAK1/SERK3 and BKK1/SERK4, inhibits their kinase activity and suppresses INF1-induced pathogen-associated molecular pattern (PAMP)-triggered immunity (PTI) in N.benthamiana. Also interacts with the host receptor-like cytoplasmic kinase (RLCK) BIK1 and inhibits its kinase activity, thereby inhibiting PAMP-induced ROS generation. In PTI, phosphorylation relaying by RLKs and RLCKs is critical for the initiation of downstream signaling. The polypeptide is Necrosis-inducing secreted protein 1 (Colletotrichum higginsianum (strain IMI 349063) (Crucifer anthracnose fungus)).